A 477-amino-acid polypeptide reads, in one-letter code: Pentatricopeptide repeat-containing protein At4g14170 (477 aa).

PPR repeat units lie at residues Asn65–Arg96, Asn97–Arg131, Asp133–Ser167, Ser168–Arg198, Asp199–Leu233, Asp234–Arg264, Gly269–Arg299, Asp300–Pro334, Asn335–Pro369, and Glu370–Lys400. The segment at Val405–Ile477 is type E motif; degenerate.

It belongs to the PPR family. PCMP-E subfamily.

The chain is Pentatricopeptide repeat-containing protein At4g14170 (PCMP-E17) from Arabidopsis thaliana (Mouse-ear cress).